The primary structure comprises 327 residues: Apoptosis facilitator Bcl-2-like protein 14 (327 aa).

A Phosphoserine modification is found at Ser44. The BH3 motif lies at 212-226 (IVELLKYSGDQLERK). Positions 308 to 315 (WIQQHGGW) match the BH2 motif.

It belongs to the Bcl-2 family. In terms of processing, phosphorylated by MELK, leading to inhibit its pro-apoptotic function. As to expression, isoform 1 is widely expressed. Isoform 2 is testis-specific.

It localises to the cytoplasm. It is found in the cytosol. Its subcellular location is the endomembrane system. Its function is as follows. Plays a role in apoptosis. The chain is Apoptosis facilitator Bcl-2-like protein 14 (BCL2L14) from Homo sapiens (Human).